Consider the following 999-residue polypeptide: Probable metabotropic glutamate receptor mgl-1 (999 aa).

L-glutamate contacts are provided by residues Ser-202, 223 to 225, Tyr-273, Glu-363, and Lys-455; that span reads AST. An N-linked (GlcNAc...) asparagine glycan is attached at Asn-518. The next 7 membrane-spanning stretches (helical) occupy residues 682 to 704, 719 to 739, 751 to 769, 792 to 812, 836 to 857, 871 to 893, and 904 to 929; these read SLVP…VVYV, LSYI…VLLS, TGIG…VKTN, VVMT…WLSV, HHFL…TYAV, FIGF…FFGT, and LCIS…IILF. The interval 975–999 is disordered; that stretch reads DSTRRRSSRKTSQPTSTSSAHDTFL. Residues 984-993 are compositionally biased toward low complexity; the sequence is KTSQPTSTSS.

Belongs to the G-protein coupled receptor 3 family.

Its subcellular location is the cell membrane. G-protein coupled receptor for glutamate. Ligand binding causes a conformation change that triggers signaling via guanine nucleotide-binding proteins (G proteins) and modulates the activity of down-stream effectors. The sequence is that of Probable metabotropic glutamate receptor mgl-1 (mgl-1) from Caenorhabditis elegans.